Consider the following 583-residue polypeptide: MLKRFIFLLVGITLTLSAHAGLFGNDQPKYLSGAEAFAFSATPKSDKQIELNWQIADGYYLYKKEIQVTPQNAEIQPLAFPAAENYHDEFFGEVEIFRNQLTLPITFSAEQANASLSVHYQGCTKGFCYPPETVTVSLDGQQAVDSAQNVAKNRENSTASQPLANAPKAEQDQLAENLANNRLSIFWFFLLGIGLAFTPCVLPMLPLLSAIVIGNKQRPNTFKALLLSFAYVQGMALTYTLLGLVVAAIGLPFQVALQSPPVLISLAILFTILAASMFGLFEIRLPNSWQQKLNAMSQKQQGGAFGSVFVMGMIAGLVASPCTSAPLSGALLYVAQSGDLLTGGLALYLLALGMGIPLILITLFGNRILPKSGDWLLKVKTAFGFVMLALPVFLLSRILPSHYEPLMWSALAMVFVGWLISVIPTQGVIKQAVRIVLFLTFAVASYPWANLVWNQGNSSHSAQVSNHLAFERVQSLAELQEKLTASQGKKVMLDLYADWCVACKEFEKYTFTDQAVQQKLAEMVVLQVDMTNNSAQNDELMKHFNVLGLPTILFFDESGKELTQSRVTGFLEANQFLNWLNQL.

The N-terminal stretch at 1 to 20 is a signal peptide; sequence MLKRFIFLLVGITLTLSAHA. 2 disulfides stabilise this stretch: Cys-123-Cys-128 and Cys-200-Cys-322. 8 consecutive transmembrane segments (helical) span residues 185 to 205, 237 to 257, 261 to 281, 302 to 322, 344 to 364, 375 to 395, 405 to 425, and 433 to 453; these read IFWF…LPML, LTYT…QVAL, PVLI…FGLF, GGAF…ASPC, GLAL…ITLF, WLLK…VFLL, PLMW…VIPT, and VRIV…NLVW. The Thioredoxin domain maps to 440 to 583; sequence TFAVASYPWA…NQFLNWLNQL (144 aa). The cysteines at positions 500 and 503 are disulfide-linked.

It belongs to the thioredoxin family. DsbD subfamily.

It localises to the cell inner membrane. The catalysed reaction is [protein]-dithiol + NAD(+) = [protein]-disulfide + NADH + H(+). It carries out the reaction [protein]-dithiol + NADP(+) = [protein]-disulfide + NADPH + H(+). In terms of biological role, required to facilitate the formation of correct disulfide bonds in some periplasmic proteins and for the assembly of the periplasmic c-type cytochromes. Acts by transferring electrons from cytoplasmic thioredoxin to the periplasm. This transfer involves a cascade of disulfide bond formation and reduction steps. This is Thiol:disulfide interchange protein DsbD from Actinobacillus pleuropneumoniae serotype 5b (strain L20).